Consider the following 341-residue polypeptide: Flap endonuclease 1 (341 aa).

Positions 1–98 (MGVQIGELIP…RELEKRREAR (98 aa)) are N-domain. Mg(2+) contacts are provided by Asp27, Asp80, Glu152, Glu154, Asp173, Asp175, and Asp236. The interval 116 to 258 (EAKKYAMRAT…KALTIVKRTK (143 aa)) is I-domain. The interval 330–338 (KQSTLESWF) is interaction with PCNA.

It belongs to the XPG/RAD2 endonuclease family. FEN1 subfamily. As to quaternary structure, interacts with PCNA. PCNA stimulates the nuclease activity without altering cleavage specificity. Mg(2+) serves as cofactor.

Functionally, structure-specific nuclease with 5'-flap endonuclease and 5'-3' exonuclease activities involved in DNA replication and repair. During DNA replication, cleaves the 5'-overhanging flap structure that is generated by displacement synthesis when DNA polymerase encounters the 5'-end of a downstream Okazaki fragment. Binds the unpaired 3'-DNA end and kinks the DNA to facilitate 5' cleavage specificity. Cleaves one nucleotide into the double-stranded DNA from the junction in flap DNA, leaving a nick for ligation. Also involved in the base excision repair (BER) pathway. Acts as a genome stabilization factor that prevents flaps from equilibrating into structures that lead to duplications and deletions. Also possesses 5'-3' exonuclease activity on nicked or gapped double-stranded DNA. This Thermococcus onnurineus (strain NA1) protein is Flap endonuclease 1.